A 696-amino-acid polypeptide reads, in one-letter code: Mitosis initiation protein fs(1)Ya (696 aa).

Disordered regions lie at residues 245–285, 336–379, and 457–492; these read NAST…RAWK, EHSS…YSTS, and IKFE…TPEI. Low complexity-rich tracts occupy residues 270 to 281 and 361 to 379; these read QQQQQQQQPLQQ and SESS…YSTS. The tract at residues 448–696 is rich in charged AA; that stretch reads TGAGINKKQI…REPIERMRRQ (249 aa). Phosphothreonine occurs at positions 478, 484, and 489. 2 short sequence motifs (nuclear localization signal) span residues 512–520 and 534–538; these read PKKDKPKEK and QPRVR. 2 disordered regions span residues 555-586 and 603-696; these read DVGE…KLEA and PASL…MRRQ. The segment covering 557–569 has biased composition (acidic residues); it reads GEPEVVDAEEEDE. 2 stretches are compositionally biased toward basic and acidic residues: residues 607–624 and 685–696; these read RGER…DKEN and RPREPIERMRRQ.

Its subcellular location is the nucleus envelope. It localises to the nucleus. It is found in the nucleoplasm. The protein localises to the cytoplasm. Cell cycle-dependent nuclear envelope component required for embryonic mitosis. The polypeptide is Mitosis initiation protein fs(1)Ya (fs(1)Ya) (Drosophila melanogaster (Fruit fly)).